The sequence spans 360 residues: Photosystem II protein D1 (360 aa).

3 helical membrane passes run 29 to 46, 118 to 133, and 142 to 156; these read YIGWFGVLMFPLLLTATT, HFLLGVACYMGREWEL, and WIAVAYSAPVAAATA. Position 118 (His-118) interacts with chlorophyll a. Residue Tyr-126 participates in pheophytin a binding. Residues Asp-170 and Glu-189 each contribute to the [CaMn4O5] cluster site. The chain crosses the membrane as a helical span at residues 197 to 218; that stretch reads FHMMGVAGVFGGSLFSAMHGSL. Chlorophyll a is bound at residue His-198. A quinone-binding positions include His-215 and 264–265; that span reads SF. His-215 lines the Fe cation pocket. Residue His-272 participates in Fe cation binding. The chain crosses the membrane as a helical span at residues 274 to 288; it reads FLALWPVVGIWFTAL. Residues His-332, Glu-333, Asp-342, and Ala-344 each coordinate [CaMn4O5] cluster. The propeptide occupies 345–360; the sequence is SGEVMPVALTAPSINA.

The protein belongs to the reaction center PufL/M/PsbA/D family. As to quaternary structure, PSII is composed of 1 copy each of membrane proteins PsbA, PsbB, PsbC, PsbD, PsbE, PsbF, PsbH, PsbI, PsbJ, PsbK, PsbL, PsbM, PsbT, PsbX, PsbY, PsbZ, Psb30/Ycf12, at least 3 peripheral proteins of the oxygen-evolving complex and a large number of cofactors. It forms dimeric complexes. The D1/D2 heterodimer binds P680, chlorophylls that are the primary electron donor of PSII, and subsequent electron acceptors. It shares a non-heme iron and each subunit binds pheophytin, quinone, additional chlorophylls, carotenoids and lipids. D1 provides most of the ligands for the Mn4-Ca-O5 cluster of the oxygen-evolving complex (OEC). There is also a Cl(-1) ion associated with D1 and D2, which is required for oxygen evolution. The PSII complex binds additional chlorophylls, carotenoids and specific lipids. serves as cofactor. Post-translationally, tyr-161 forms a radical intermediate that is referred to as redox-active TyrZ, YZ or Y-Z. In terms of processing, C-terminally processed by CTPA; processing is essential to allow assembly of the oxygen-evolving complex and thus photosynthetic growth.

It localises to the plastid. It is found in the cyanelle thylakoid membrane. The catalysed reaction is 2 a plastoquinone + 4 hnu + 2 H2O = 2 a plastoquinol + O2. Photosystem II (PSII) is a light-driven water:plastoquinone oxidoreductase that uses light energy to abstract electrons from H(2)O, generating O(2) and a proton gradient subsequently used for ATP formation. It consists of a core antenna complex that captures photons, and an electron transfer chain that converts photonic excitation into a charge separation. The D1/D2 (PsbA/PsbD) reaction center heterodimer binds P680, the primary electron donor of PSII as well as several subsequent electron acceptors. The sequence is that of Photosystem II protein D1 from Cyanophora paradoxa.